Consider the following 131-residue polypeptide: Methylglyoxal synthase (131 aa).

The MGS-like domain maps to 1–131 (MKIALIAHDK…GDLDYRKLRK (131 aa)). Substrate contacts are provided by residues His-8, Lys-12, 34 to 37 (TGTT), and 54 to 55 (SG). The active-site Proton donor/acceptor is the Asp-60. His-87 is a substrate binding site.

The protein belongs to the methylglyoxal synthase family.

The enzyme catalyses dihydroxyacetone phosphate = methylglyoxal + phosphate. Its function is as follows. Catalyzes the formation of methylglyoxal from dihydroxyacetone phosphate. The protein is Methylglyoxal synthase of Bacillus cereus (strain AH820).